The sequence spans 498 residues: Guanosine-5'-triphosphate,3'-diphosphate pyrophosphatase (498 aa).

This sequence belongs to the GppA/Ppx family. GppA subfamily.

The enzyme catalyses guanosine 3'-diphosphate 5'-triphosphate + H2O = guanosine 3',5'-bis(diphosphate) + phosphate + H(+). The protein operates within purine metabolism; ppGpp biosynthesis; ppGpp from GTP: step 2/2. Its function is as follows. Catalyzes the conversion of pppGpp to ppGpp. Guanosine pentaphosphate (pppGpp) is a cytoplasmic signaling molecule which together with ppGpp controls the 'stringent response', an adaptive process that allows bacteria to respond to amino acid starvation, resulting in the coordinated regulation of numerous cellular activities. In Yersinia enterocolitica serotype O:8 / biotype 1B (strain NCTC 13174 / 8081), this protein is Guanosine-5'-triphosphate,3'-diphosphate pyrophosphatase.